The following is a 603-amino-acid chain: Serine protease 56 (603 aa).

An N-terminal signal peptide occupies residues 1–19 (MLLAVLLLLPLPSSWFAHG). A disordered region spans residues 64–96 (SHECRGSGRPRPQALLQDPPEPGPCGERRPSTA). N97 is a glycosylation site (N-linked (GlcNAc...) asparagine). Positions 105-337 (IVGGSAAPPG…FKDWLQEQMS (233 aa)) constitute a Peptidase S1 domain. An intrachain disulfide couples C130 to C146. Catalysis depends on charge relay system residues H145 and D191. Intrachain disulfides connect C225/C292, C256/C271, and C282/C313. The Charge relay system role is filled by S286. 2 disordered regions span residues 442-474 (PARELRLHSGSRAAGTRFPKRRPEPRGEANGCP) and 573-603 (EGPWMDVGQGPGLERKGHHPLNPQVPPARQP).

This sequence belongs to the peptidase S1 family. As to expression, expressed neural retina, cornea, sclera and optic nerve.

In terms of biological role, serine protease required during eye development. The polypeptide is Serine protease 56 (PRSS56) (Homo sapiens (Human)).